The chain runs to 468 residues: V-type proton ATPase subunit S1 (468 aa).

Residues 1–35 form the signal peptide; the sequence is MMAATAAAQVRAGTRWAPALCRMPWLPLMLVAAAA. Positions 36–228 are excised as a propeptide; the sequence is ATSEQQVPLV…TAVRPSRVAR (193 aa). Residues 36–417 lie on the Lumenal side of the membrane; the sequence is ATSEQQVPLV…KKFSYASDCA (382 aa). Residues Asn167, Asn258, Asn271, Asn294, Asn301, Asn348, Asn355, and Asn404 are each glycosylated (N-linked (GlcNAc...) asparagine). Cys369 and Cys416 are disulfide-bonded. A helical transmembrane segment spans residues 418-438; it reads GFFSPGIWMGLLTSLFMLFIF. Residues 439 to 468 are Cytoplasmic-facing; the sequence is TYGLHMILSLKTMDRFDDHKGPTITLTQIV.

This sequence belongs to the vacuolar ATPase subunit S1 family. In terms of assembly, accessory component of the multisubunit proton-transporting vacuolar (V)-ATPase protein pump. Interacts (via N-terminus) with ATP6AP2 (via N-terminus). Interacts with RNASEK. Interacts with TMEM106B (via C-terminus). N-glycosylated.

It is found in the endoplasmic reticulum membrane. It localises to the endoplasmic reticulum-Golgi intermediate compartment membrane. Its subcellular location is the cytoplasmic vesicle. The protein localises to the secretory vesicle. The protein resides in the synaptic vesicle membrane. It is found in the clathrin-coated vesicle membrane. Functionally, accessory subunit of the proton-transporting vacuolar (V)-ATPase protein pump, which is required for luminal acidification of secretory vesicles. Guides the V-type ATPase into specialized subcellular compartments, such as neuroendocrine regulated secretory vesicles or the ruffled border of the osteoclast, thereby regulating its activity. Involved in membrane trafficking and Ca(2+)-dependent membrane fusion. May play a role in the assembly of the V-type ATPase complex. In aerobic conditions, involved in intracellular iron homeostasis, thus triggering the activity of Fe(2+) prolyl hydroxylase (PHD) enzymes, and leading to HIF1A hydroxylation and subsequent proteasomal degradation. In islets of Langerhans cells, may regulate the acidification of dense-core secretory granules. The protein is V-type proton ATPase subunit S1 (ATP6AP1) of Bos taurus (Bovine).